We begin with the raw amino-acid sequence, 329 residues long: tRNA pseudouridine synthase B (329 aa).

His-43 is a binding site for substrate. Asp-48 serves as the catalytic Nucleophile. Residues Tyr-76, Tyr-179, and Leu-200 each coordinate substrate.

This sequence belongs to the pseudouridine synthase TruB family. Type 1 subfamily.

The catalysed reaction is uridine(55) in tRNA = pseudouridine(55) in tRNA. In terms of biological role, responsible for synthesis of pseudouridine from uracil-55 in the psi GC loop of transfer RNAs. In Yersinia enterocolitica serotype O:8 / biotype 1B (strain NCTC 13174 / 8081), this protein is tRNA pseudouridine synthase B.